A 389-amino-acid polypeptide reads, in one-letter code: Packaging protein 3 (389 aa).

The tract at residues 1 to 131 (MHPVLRQMKP…VKAEVNFQTT (131 aa)) is interaction with packaging protein 1. The segment at 350–389 (EKENPDGSVSFQQHERGTQSHENGGHAEPAYSRRQLGRFY) is disordered. Basic and acidic residues predominate over residues 362-374 (QHERGTQSHENGG).

Belongs to the adenoviridae packaging protein 3 family. In terms of assembly, part of the genome packaging complex composed of packaging proteins 1, 2 and 3; this complex specifically binds to the packaging sequence on the left end of viral genomic DNA and performs packaging of the viral genome. Interacts with hexon-linking protein IIIa; this interaction is required to promote correct genome packaging. Cleaved at different sites by the viral protease during virion maturation.

Its subcellular location is the host nucleus. Involved in viral genome packaging through its interaction with packaging proteins 1 and 2. After proteolytic cleavage by adenovirus protease, L1 52/55k protein is removed from the capsid during viral maturation. The chain is Packaging protein 3 from Canine adenovirus serotype 1 (strain CLL) (CAdV-1).